Reading from the N-terminus, the 279-residue chain is Cell death abnormality protein 2 (279 aa).

An SH2 domain is found at 14–115 (FYFPGMSREE…EASLLAAYKK (102 aa)). The SH3 1 domain maps to 116-176 (PIIEVVVGTF…PANYVQIQME (61 aa)). The tract at residues 181–213 (RTSKGASQSSIGSSGGGAERFSSASTSSDNIEL) is disordered. A compositionally biased stretch (polar residues) spans 202–211 (SSASTSSDNI). The region spanning 214 to 277 (QPRLPAKAKV…PHTYLRFTAV (64 aa)) is the SH3 2 domain.

It belongs to the CRK family. In terms of assembly, interacts with ced-5 (via C-terminus which contains a candidate SH3-binding, proline-rich region). Forms a ternary complex with ced-5 and ced-12. Interacts (via SH2 domain) with src-1 (when activated and phosphorylated at 'Tyr-416').

In terms of biological role, required for cell migration and engulfment of cell corpses but not for programmed cell death/apoptosis. Has a role in the migration of the 2 gonadal distal tip cells (DTCs). Plays a role in protecting dopaminergic neurons from oxidative stress-induced degeneration. This chain is Cell death abnormality protein 2, found in Caenorhabditis elegans.